The primary structure comprises 365 residues: DNA replication and repair protein RecF (365 aa).

ATP is bound at residue 30-37; sequence GENGQGKT.

It belongs to the RecF family.

It is found in the cytoplasm. Functionally, the RecF protein is involved in DNA metabolism; it is required for DNA replication and normal SOS inducibility. RecF binds preferentially to single-stranded, linear DNA. It also seems to bind ATP. In Desulfitobacterium hafniense (strain DSM 10664 / DCB-2), this protein is DNA replication and repair protein RecF.